A 120-amino-acid polypeptide reads, in one-letter code: Large ribosomal subunit protein uL18 (120 aa).

This sequence belongs to the universal ribosomal protein uL18 family. Part of the 50S ribosomal subunit; part of the 5S rRNA/L5/L18/L25 subcomplex. Contacts the 5S and 23S rRNAs.

Its function is as follows. This is one of the proteins that bind and probably mediate the attachment of the 5S RNA into the large ribosomal subunit, where it forms part of the central protuberance. This Bradyrhizobium sp. (strain ORS 278) protein is Large ribosomal subunit protein uL18.